Here is a 609-residue protein sequence, read N- to C-terminus: Phosphoenolpyruvate carboxykinase [GTP] (609 aa).

Residues arginine 81 and 220–222 contribute to the substrate site; that span reads YGG. Positions 229 and 249 each coordinate Mn(2+). Position 271 (serine 271) interacts with substrate. 272 to 277 provides a ligand contact to GTP; sequence ACGKTN. Cysteine 273 is a catalytic residue. Residue aspartate 296 coordinates Mn(2+). Substrate is bound at residue 387 to 389; sequence NSR. GTP is bound by residues arginine 389, arginine 420, and 515–518; that span reads FGEN.

Belongs to the phosphoenolpyruvate carboxykinase [GTP] family. As to quaternary structure, monomer. Requires Mn(2+) as cofactor.

It localises to the cytoplasm. The catalysed reaction is oxaloacetate + GTP = phosphoenolpyruvate + GDP + CO2. It participates in carbohydrate biosynthesis; gluconeogenesis. In terms of biological role, catalyzes the conversion of oxaloacetate (OAA) to phosphoenolpyruvate (PEP), the rate-limiting step in the metabolic pathway that produces glucose from lactate and other precursors derived from the citric acid cycle. The chain is Phosphoenolpyruvate carboxykinase [GTP] from Mycolicibacterium paratuberculosis (strain ATCC BAA-968 / K-10) (Mycobacterium paratuberculosis).